A 260-amino-acid polypeptide reads, in one-letter code: Putative hydro-lyase Dshi_0610 (260 aa).

This sequence belongs to the D-glutamate cyclase family.

The polypeptide is Putative hydro-lyase Dshi_0610 (Dinoroseobacter shibae (strain DSM 16493 / NCIMB 14021 / DFL 12)).